The primary structure comprises 504 residues: 2,3-bisphosphoglycerate-independent phosphoglycerate mutase (504 aa).

Asp-13 and Ser-63 together coordinate Mn(2+). Ser-63 serves as the catalytic Phosphoserine intermediate. Substrate is bound by residues His-124, 153-154, Arg-183, Arg-189, 254-257, and Lys-330; these read RD and RADR. Mn(2+) contacts are provided by Asp-397, His-401, Asp-438, His-439, and His-457.

This sequence belongs to the BPG-independent phosphoglycerate mutase family. In terms of assembly, monomer. It depends on Mn(2+) as a cofactor.

The catalysed reaction is (2R)-2-phosphoglycerate = (2R)-3-phosphoglycerate. The protein operates within carbohydrate degradation; glycolysis; pyruvate from D-glyceraldehyde 3-phosphate: step 3/5. Functionally, catalyzes the interconversion of 2-phosphoglycerate and 3-phosphoglycerate. The sequence is that of 2,3-bisphosphoglycerate-independent phosphoglycerate mutase from Rhodopseudomonas palustris (strain ATCC BAA-98 / CGA009).